Reading from the N-terminus, the 425-residue chain is UDP-sugar transporter protein SLC35A5 (425 aa).

At 1-7 the chain is on the cytoplasmic side; that stretch reads MESNCGH. A helical transmembrane segment spans residues 8-28; the sequence is PMLSVSSAMYTFLLGAIFITL. Topologically, residues 29-52 are lumenal; it reads SSSRILLVKYSANEENKYDYLPTT. The chain crosses the membrane as a helical span at residues 53–73; sequence VNVCSELVKLVFCALVSFWVL. Residues 74–92 are Cytoplasmic-facing; the sequence is KKEDHQNRKLRCGSWKEFF. Residues 93-115 traverse the membrane as a helical segment; sequence NFMKWSIPAFLYFLDNLIVFYVL. At 116 to 119 the chain is on the lumenal side; the sequence is SYLQ. The chain crosses the membrane as a helical span at residues 120 to 142; the sequence is PAMAVIFSNFSIITTALLFRIVL. The Cytoplasmic portion of the chain corresponds to 143–147; it reads KRHLN. A helical membrane pass occupies residues 148–168; that stretch reads GIQWASLLILFLSIVALTSGT. Over 169–228 the chain is Lumenal; that stretch reads ETSQHSLAGHGFHHDALFSPSNSCLLFRSECPRKDNCTAKEWTFSEAQWNTTARVFSHIR. Asn204 and Asn218 each carry an N-linked (GlcNAc...) asparagine glycan. A helical membrane pass occupies residues 229–249; that stretch reads LGLGHVLIIVQCFISSMANIY. The Cytoplasmic segment spans residues 250–263; sequence NEKILKEGNQLTES. A helical transmembrane segment spans residues 264–284; that stretch reads IFVQNSKLYFFGVLFNGLTLG. At 285–303 the chain is on the lumenal side; that stretch reads LQSGNRDQIKNCGIFYGHN. Residues 304–324 form a helical membrane-spanning segment; it reads AFSVALIFVTAFQGLSVAFIL. At 325 to 330 the chain is on the cytoplasmic side; that stretch reads KFLDNM. Residues 331–351 traverse the membrane as a helical segment; it reads FHVLMAQVTTVVITTVSVLVF. Topologically, residues 352-354 are lumenal; sequence DFR. A helical transmembrane segment spans residues 355-375; it reads PSLEFFLEAPSVLLSILIYNA. Residues 376-425 are Cytoplasmic-facing; it reads SNPQGVENVPRKERIRDLSGTLWERSSGDGEELERLTKPKSDIESDEDTF. Residues Ser394, Ser416, and Ser420 each carry the phosphoserine modification. The segment at 398–425 is disordered; it reads WERSSGDGEELERLTKPKSDIESDEDTF. Over residues 408-418 the composition is skewed to basic and acidic residues; it reads LERLTKPKSDI.

Belongs to the nucleotide-sugar transporter family. SLC35A subfamily. In terms of assembly, probably forms homooligomers and heterooligomers with SLC35A1, SLC35A2, SLC35A3 and SLC35A4.

The protein localises to the golgi apparatus membrane. It catalyses the reaction UMP(out) + UDP-alpha-D-glucuronate(in) = UMP(in) + UDP-alpha-D-glucuronate(out). The catalysed reaction is UMP(out) + UDP-N-acetyl-alpha-D-glucosamine(in) = UMP(in) + UDP-N-acetyl-alpha-D-glucosamine(out). The enzyme catalyses UDP-N-acetyl-alpha-D-galactosamine(in) + UMP(out) = UDP-N-acetyl-alpha-D-galactosamine(out) + UMP(in). Probable UDP-sugar:UMP transmembrane antiporter involved in UDP-alpha-D-glucuronate/UDP-GlcA, UDP-GlcNAc/UDP-N-acetyl-alpha-D-glucosamine and UDP-N-acetyl-alpha-D-galactosamine/UDP-GalNAc transport from the cytosol to the lumen of the Golgi. The polypeptide is UDP-sugar transporter protein SLC35A5 (Bos taurus (Bovine)).